A 351-amino-acid chain; its full sequence is Phospho-N-acetylmuramoyl-pentapeptide-transferase (351 aa).

10 consecutive transmembrane segments (helical) span residues 17 to 37 (MAYA…HIIL), 62 to 82 (GIPT…LVFW), 85 to 105 (ILNV…FLGF), 130 to 150 (IIFS…HVSI), 163 to 183 (LGVF…NSFN), 190 to 210 (GLAI…AYIT), 230 to 250 (LVIF…FNAY), 254 to 274 (IMMG…TALI), 281 to 301 (FSIL…QVIV), and 328 to 348 (QVVI…LSTI).

It belongs to the glycosyltransferase 4 family. MraY subfamily. It depends on Mg(2+) as a cofactor.

It is found in the cell inner membrane. The enzyme catalyses UDP-N-acetyl-alpha-D-muramoyl-L-alanyl-gamma-D-glutamyl-meso-2,6-diaminopimeloyl-D-alanyl-D-alanine + di-trans,octa-cis-undecaprenyl phosphate = di-trans,octa-cis-undecaprenyl diphospho-N-acetyl-alpha-D-muramoyl-L-alanyl-D-glutamyl-meso-2,6-diaminopimeloyl-D-alanyl-D-alanine + UMP. Its pathway is cell wall biogenesis; peptidoglycan biosynthesis. Its function is as follows. Catalyzes the initial step of the lipid cycle reactions in the biosynthesis of the cell wall peptidoglycan: transfers peptidoglycan precursor phospho-MurNAc-pentapeptide from UDP-MurNAc-pentapeptide onto the lipid carrier undecaprenyl phosphate, yielding undecaprenyl-pyrophosphoryl-MurNAc-pentapeptide, known as lipid I. The sequence is that of Phospho-N-acetylmuramoyl-pentapeptide-transferase from Borreliella afzelii (strain PKo) (Borrelia afzelii).